Consider the following 570-residue polypeptide: Developmental and secondary metabolism regulator veA (570 aa).

Disordered stretches follow at residues 1 to 24, 39 to 60, 266 to 491, and 504 to 541; these read MATR…ISRE, ERAR…VDPP, DMYA…LGSG, and KRSH…DYGR. Positions 25-231 constitute a Velvet domain; it reads GKKITYKLSV…AEQGCRVRIR (207 aa). The short motif at 39 to 44 is the Nuclear localization signal element; it reads ERARAC. Residues 278–287 are compositionally biased toward polar residues; sequence STSISTTADT. Residues 315–335 are compositionally biased toward low complexity; the sequence is SMPAASAAPAPAPVHSPATSA. 3 stretches are compositionally biased toward polar residues: residues 336–354, 363–395, and 427–445; these read QTSS…SQYP, QSAT…TSSG, and NMQT…YPTL. The segment at 454–493 is PEST; that stretch reads PTPANHVTSLPPLKVLSGEYSHPSQPNAQSPHHDLGSGKR. Positions 505–526 are enriched in basic and acidic residues; that stretch reads RSHEETFGSDERPLHNGMRPDM.

It belongs to the velvet family. VeA subfamily. In terms of assembly, component of the heterotrimeric velvet complex composed of laeA, veA and velB; VeA acting as a bridging protein between laeA and velB.

The protein localises to the nucleus. It localises to the cytoplasm. Functionally, component of the velvet transcription factor complex that controls sexual/asexual developmental ratio in response to light, promoting sexual development in the darkness while stimulating asexual sporulation under illumination. The velvet complex hat acts as a global regulator for secondary metabolite gene expression. Controls the expression of hundreds of genes, including those comprising more than a dozen known secondary metabolite gene clusters. Controls the expression of the gliotoxin gene cluster. Controls the expression of the fumagillin, fumitremorgin G, fumigaclavine C and glionitrin gene clusters. The regulation of the fumagillin gene cluster and fumagillin production is performed through direct control of the expression of fumR. Negatively regulates conidiation. Required for normal protease activity. This Aspergillus fumigatus (strain ATCC MYA-4609 / CBS 101355 / FGSC A1100 / Af293) (Neosartorya fumigata) protein is Developmental and secondary metabolism regulator veA.